Reading from the N-terminus, the 223-residue chain is DNA mismatch repair protein MutH (223 aa).

This sequence belongs to the MutH family.

The protein resides in the cytoplasm. Functionally, sequence-specific endonuclease that cleaves unmethylated GATC sequences. It is involved in DNA mismatch repair. The protein is DNA mismatch repair protein MutH of Haemophilus influenzae (strain PittGG).